A 434-amino-acid polypeptide reads, in one-letter code: 3-phosphoshikimate 1-carboxyvinyltransferase (434 aa).

3 residues coordinate 3-phosphoshikimate: Lys22, Ser23, and Arg27. Position 22 (Lys22) interacts with phosphoenolpyruvate. Phosphoenolpyruvate-binding residues include Gly93 and Arg121. Ser168, Ser169, Gln170, Ser199, Asp320, and Lys347 together coordinate 3-phosphoshikimate. Residue Gln170 coordinates phosphoenolpyruvate. The active-site Proton acceptor is Asp320. Phosphoenolpyruvate is bound by residues Arg351, Arg395, and Lys420.

This sequence belongs to the EPSP synthase family. As to quaternary structure, monomer.

The protein localises to the cytoplasm. It carries out the reaction 3-phosphoshikimate + phosphoenolpyruvate = 5-O-(1-carboxyvinyl)-3-phosphoshikimate + phosphate. Its pathway is metabolic intermediate biosynthesis; chorismate biosynthesis; chorismate from D-erythrose 4-phosphate and phosphoenolpyruvate: step 6/7. Functionally, catalyzes the transfer of the enolpyruvyl moiety of phosphoenolpyruvate (PEP) to the 5-hydroxyl of shikimate-3-phosphate (S3P) to produce enolpyruvyl shikimate-3-phosphate and inorganic phosphate. In Cupriavidus necator (strain ATCC 17699 / DSM 428 / KCTC 22496 / NCIMB 10442 / H16 / Stanier 337) (Ralstonia eutropha), this protein is 3-phosphoshikimate 1-carboxyvinyltransferase.